We begin with the raw amino-acid sequence, 179 residues long: Ribosome maturation factor RimM (179 aa).

Residues 97 to 170 form the PRC barrel domain; it reads DGELSWNFFV…LITVELPEGL (74 aa).

It belongs to the RimM family. Binds ribosomal protein uS19.

Its subcellular location is the cytoplasm. In terms of biological role, an accessory protein needed during the final step in the assembly of 30S ribosomal subunit, possibly for assembly of the head region. Essential for efficient processing of 16S rRNA. May be needed both before and after RbfA during the maturation of 16S rRNA. It has affinity for free ribosomal 30S subunits but not for 70S ribosomes. In Bacteroides thetaiotaomicron (strain ATCC 29148 / DSM 2079 / JCM 5827 / CCUG 10774 / NCTC 10582 / VPI-5482 / E50), this protein is Ribosome maturation factor RimM.